A 303-amino-acid chain; its full sequence is UDP-3-O-acyl-N-acetylglucosamine deacetylase (303 aa).

3 residues coordinate Zn(2+): histidine 78, histidine 237, and aspartate 241. Residue histidine 264 is the Proton donor of the active site.

This sequence belongs to the LpxC family. Zn(2+) is required as a cofactor.

It catalyses the reaction a UDP-3-O-[(3R)-3-hydroxyacyl]-N-acetyl-alpha-D-glucosamine + H2O = a UDP-3-O-[(3R)-3-hydroxyacyl]-alpha-D-glucosamine + acetate. It functions in the pathway glycolipid biosynthesis; lipid IV(A) biosynthesis; lipid IV(A) from (3R)-3-hydroxytetradecanoyl-[acyl-carrier-protein] and UDP-N-acetyl-alpha-D-glucosamine: step 2/6. Functionally, catalyzes the hydrolysis of UDP-3-O-myristoyl-N-acetylglucosamine to form UDP-3-O-myristoylglucosamine and acetate, the committed step in lipid A biosynthesis. This chain is UDP-3-O-acyl-N-acetylglucosamine deacetylase, found in Chromohalobacter salexigens (strain ATCC BAA-138 / DSM 3043 / CIP 106854 / NCIMB 13768 / 1H11).